The following is a 490-amino-acid chain: Betaine aldehyde dehydrogenase (490 aa).

Positions 26, 27, and 93 each coordinate K(+). Residue 150-152 (GAW) participates in NAD(+) binding. The active-site Charge relay system is Lys162. 176–179 (KPSE) is a binding site for NAD(+). Residue Val180 coordinates K(+). 230 to 233 (GTST) contacts NAD(+). Leu246 provides a ligand contact to K(+). Glu252 serves as the catalytic Proton acceptor. 3 residues coordinate NAD(+): Gly254, Cys286, and Glu387. Cys286 acts as the Nucleophile in catalysis. Position 286 is a cysteine sulfenic acid (-SOH) (Cys286). 2 residues coordinate K(+): Lys457 and Gly460. The Charge relay system role is filled by Glu464.

Belongs to the aldehyde dehydrogenase family. In terms of assembly, dimer of dimers. The cofactor is K(+).

It carries out the reaction betaine aldehyde + NAD(+) + H2O = glycine betaine + NADH + 2 H(+). The protein operates within amine and polyamine biosynthesis; betaine biosynthesis via choline pathway; betaine from betaine aldehyde: step 1/1. In terms of biological role, involved in the biosynthesis of the osmoprotectant glycine betaine. Catalyzes the irreversible oxidation of betaine aldehyde to the corresponding acid. The polypeptide is Betaine aldehyde dehydrogenase (Pseudomonas paraeruginosa (strain DSM 24068 / PA7) (Pseudomonas aeruginosa (strain PA7))).